Reading from the N-terminus, the 65-residue chain is MGNTSITIEFTSKFWPYFTLIHMILTPISLLIIITIMIAILNKLSEHKTFCNKTLELGQMYQINT.

The Intravirion portion of the chain corresponds to 1-20; it reads MGNTSITIEFTSKFWPYFTL. The tract at residues 6 to 15 is interaction with host BCAP31; that stretch reads ITIEFTSKFW. The chain crosses the membrane as a helical; Signal-anchor for type II membrane protein span at residues 21–44; that stretch reads IHMILTPISLLIIITIMIAILNKL. The interaction with small-molecule inhibitor stretch occupies residues 38–43; that stretch reads IAILNK. The Virion surface portion of the chain corresponds to 45 to 65; sequence SEHKTFCNKTLELGQMYQINT. N-linked (GlcNAc...) asparagine; by host glycosylation occurs at N52.

The protein belongs to the orthopneumovirus small hydrophobic protein family. As to quaternary structure, homopentamer forming a funnel-like pore. Interacts with glycoprotein G; this interaction occurs on the surface of virion particles and infected cells. Interacts with host BCAP31 (via C-terminus); this interaction is direct. Four species of SH have been detected in infected cell cytoplasm: a 7.5 kDa non-glycosylated form (SH0), a 13-15 kDa form that contains one or two N-linked carbohydrate side chains of the high-mannose type (SHg), a 21-30 kDa polylactosaminoglycan-modified form of the protein (SHp), and the isoform generated by alternative translational initiation. Of these different forms, SH0 is by far the most abundant protein detected during virus infection. In terms of processing, tyrosine phosphorylated.

It is found in the virion membrane. Its subcellular location is the host cell membrane. It localises to the host Golgi apparatus membrane. The protein resides in the host endoplasmic reticulum membrane. Channel activity is inhibited by copper. Also inhibited by small-molecule pyronin B. Its function is as follows. Viroporin that forms a homopentameric ion channel displaying low ion selectivity. May play a role in virus morphogenesis and pathogenicity at various stages of the viral life cycle. Accumulates at the membrane of the Golgi apparatus in infected cells and may facilitate virus release by modifying the secretory pathway. May enhance host membrane permeability and disrupt cellular ion homeostasis, which can be sensed as damage-associated molecular patterns/danger signals, triggering NLRP3 inflammasome activation and inflammatory immune response. Also inhibits host TNFA-mediated signaling pathway and may delay apoptosis, allowing time for the virus to replicate. This chain is Small hydrophobic protein, found in Human respiratory syncytial virus B (strain 18537).